The chain runs to 524 residues: RNA-binding protein 39 (524 aa).

Residues M1–T146 are disordered. An N-acetylalanine modification is found at A2. The segment covering P14–S32 has biased composition (basic and acidic residues). Basic residues-rich tracts occupy residues K33–K56 and K64–Y95. A Phosphotyrosine modification is found at Y95. 2 positions are modified to phosphoserine: S97 and S100. K111 participates in a covalent cross-link: Glycyl lysine isopeptide (Lys-Gly) (interchain with G-Cter in SUMO2). S117 is modified (phosphoserine). K119 participates in a covalent cross-link: Glycyl lysine isopeptide (Lys-Gly) (interchain with G-Cter in SUMO2). Positions K119 to P130 are enriched in basic residues. Phosphoserine occurs at positions 121 and 136. Residues F131–T146 are compositionally biased toward basic and acidic residues. Residue T146 is modified to Phosphothreonine. Residues R153 to A230 enclose the RRM 1 domain. K244 participates in a covalent cross-link: Glycyl lysine isopeptide (Lys-Gly) (interchain with G-Cter in SUMO2). The RRM 2 domain occupies M250–E328. The activating domain stretch occupies residues K291–G355. The interval K291–Q400 is interaction with JUN. Phosphoserine occurs at positions 334, 337, and 341. The tract at residues G355–Q400 is interaction with ESR1 and ESR2. Residues Q400–R524 form an interaction with NCOA6 region. Residues E439–L502 form the RRM 3 domain.

Belongs to the splicing factor SR family. As to quaternary structure, interacts with NCOA6 and JUN. Interacts with ESR1 and ESR2, in the presence of estradiol (E2). Interacts with RSRC1 (via Arg/Ser-rich domain). Interacts with SF3B1. Interacts with ZNF106 (via N-terminus).

It localises to the nucleus speckle. In terms of biological role, RNA-binding protein that acts as a pre-mRNA splicing factor. Acts by promoting exon inclusion via regulation of exon cassette splicing. Also acts as a transcriptional coactivator for steroid nuclear receptors ESR1/ER-alpha and ESR2/ER-beta, and JUN/AP-1, independently of the pre-mRNA splicing factor activity. The protein is RNA-binding protein 39 (RBM39) of Pongo abelii (Sumatran orangutan).